A 574-amino-acid chain; its full sequence is ESX-1 secretion system protein EccA1 (574 aa).

Glycine 335 to threonine 342 contributes to the ATP binding site.

It belongs to the CbxX/CfxQ family. In terms of assembly, part of the ESX-1 / type VII secretion system (T7SS), which is composed of cytosolic and membrane components.

It is found in the cytoplasm. Functionally, part of the ESX-1 / type VII specialized secretion system (T7SS), which exports several proteins including EsxA and EsxB. Plays a role in DNA conjugation, in both donor and recipient strains. EccA1 exhibits ATPase activity and may provide energy for the export of ESX-1 substrates. This is ESX-1 secretion system protein EccA1 from Mycolicibacterium smegmatis (strain ATCC 700084 / mc(2)155) (Mycobacterium smegmatis).